The following is a 308-amino-acid chain: D-alanine--D-alanine ligase (308 aa).

Residues 103–302 (KFVFRAAGLP…YGELVSWMVE (200 aa)) form the ATP-grasp domain. 130–184 (MDPPYVIKPVSEGSSVGVFIVRAGDNRPPAELTSAEWNLGDEVMAERYIAGRELT) provides a ligand contact to ATP. 3 residues coordinate Mg(2+): Asp252, Glu269, and Asn271.

The protein belongs to the D-alanine--D-alanine ligase family. Requires Mg(2+) as cofactor. Mn(2+) is required as a cofactor.

It is found in the cytoplasm. It carries out the reaction 2 D-alanine + ATP = D-alanyl-D-alanine + ADP + phosphate + H(+). Its pathway is cell wall biogenesis; peptidoglycan biosynthesis. Cell wall formation. In Parvibaculum lavamentivorans (strain DS-1 / DSM 13023 / NCIMB 13966), this protein is D-alanine--D-alanine ligase.